Consider the following 427-residue polypeptide: UPF0229 protein YeaH (427 aa).

Over residues 79–90 (NDHFVQNDRIER) the composition is skewed to basic and acidic residues. Residues 79 to 110 (NDHFVQNDRIERPQGGGGGSGSGQGQASQDGE) form a disordered region. Gly residues predominate over residues 92 to 102 (QGGGGGSGSGQ).

Belongs to the UPF0229 family.

The polypeptide is UPF0229 protein YeaH (Shigella boydii serotype 18 (strain CDC 3083-94 / BS512)).